Reading from the N-terminus, the 335-residue chain is Meiotic expression up-regulated protein 14 (335 aa).

The protein localises to the cytoplasm. It localises to the cytoskeleton. Its subcellular location is the microtubule organizing center. It is found in the spindle pole body. The protein resides in the nucleus membrane. The protein localises to the prospore membrane. Its function is as follows. Has a role in nuclear division during meiosis II where it stabilizes the proper segregation of the spindle pole bodies. Also has a role in the formation and extension of the forespore membrane. The sequence is that of Meiotic expression up-regulated protein 14 (meu14) from Schizosaccharomyces pombe (strain 972 / ATCC 24843) (Fission yeast).